We begin with the raw amino-acid sequence, 228 residues long: Putative adhesin A1I_01215 (228 aa).

Residues 1-22 form the signal peptide; sequence MKKLLLIAATSATVLSSALSFA.

This Rickettsia bellii (strain OSU 85-389) protein is Putative adhesin A1I_01215.